A 90-amino-acid polypeptide reads, in one-letter code: MNVVPSRPEVSRGSPKSPLREHVAQVVRRYLRDLDGCDVNDLYNMVLHEMEIPLLVEVLNHCEGNQSRAAALLGIHRATLRKKLKEYGLV.

Residues 66 to 85 (QSRAAALLGIHRATLRKKLK) constitute a DNA-binding region (H-T-H motif).

Belongs to the transcriptional regulatory Fis family.

This is Putative Fis-like DNA-binding protein from Xylella fastidiosa (strain 9a5c).